We begin with the raw amino-acid sequence, 57 residues long: Large ribosomal subunit protein bL32c (57 aa).

The protein belongs to the bacterial ribosomal protein bL32 family.

It is found in the plastid. The protein resides in the chloroplast. In Amborella trichopoda, this protein is Large ribosomal subunit protein bL32c.